The sequence spans 452 residues: Cell division protein FtsZ (452 aa).

Residues glycine 24–asparagine 28, glycine 111–glycine 113, glutamate 142, arginine 146, and aspartate 190 each bind GTP. Residues aspartate 432–aspartate 452 form a disordered region. Residues glutamine 433–aspartate 442 are compositionally biased toward basic and acidic residues.

Belongs to the FtsZ family. As to quaternary structure, homodimer. Polymerizes to form a dynamic ring structure in a strictly GTP-dependent manner. Interacts directly with several other division proteins.

The protein resides in the cytoplasm. In terms of biological role, essential cell division protein that forms a contractile ring structure (Z ring) at the future cell division site. The regulation of the ring assembly controls the timing and the location of cell division. One of the functions of the FtsZ ring is to recruit other cell division proteins to the septum to produce a new cell wall between the dividing cells. Binds GTP and shows GTPase activity. This chain is Cell division protein FtsZ, found in Rickettsia conorii (strain ATCC VR-613 / Malish 7).